Reading from the N-terminus, the 155-residue chain is Ribosomal RNA large subunit methyltransferase H (155 aa).

S-adenosyl-L-methionine contacts are provided by residues L72, G103, and 122–127; that span reads LGRMVW.

This sequence belongs to the RNA methyltransferase RlmH family. In terms of assembly, homodimer.

The protein resides in the cytoplasm. The enzyme catalyses pseudouridine(1915) in 23S rRNA + S-adenosyl-L-methionine = N(3)-methylpseudouridine(1915) in 23S rRNA + S-adenosyl-L-homocysteine + H(+). Functionally, specifically methylates the pseudouridine at position 1915 (m3Psi1915) in 23S rRNA. The polypeptide is Ribosomal RNA large subunit methyltransferase H (Cereibacter sphaeroides (strain ATCC 17029 / ATH 2.4.9) (Rhodobacter sphaeroides)).